We begin with the raw amino-acid sequence, 259 residues long: Dickkopf-related protein 2 (259 aa).

The N-terminal stretch at 1–33 is a signal peptide; it reads MAALMRVKDSSRCLLLLAAVLMVESSQLGSSRA. The segment at 42–70 is disordered; the sequence is LGGETPAQSANRSAGMNQGLAFGGSKKGK. Positions 47-57 are enriched in polar residues; the sequence is PAQSANRSAGM. N-linked (GlcNAc...) asparagine glycosylation is present at Asn-52. The segment at 78–127 is DKK-type Cys-1; that stretch reads CSSDKECEVGRYCHSPHQGSSACMLCRRKKKRCHRDGMCCPGTRCNNGIC. 5 disulfide bridges follow: Cys-183–Cys-195, Cys-189–Cys-204, Cys-194–Cys-231, Cys-214–Cys-239, and Cys-233–Cys-256. Residues 183-256 form a DKK-type Cys-2 region; sequence CLRSSDCIDG…YSSKARLHVC (74 aa).

This sequence belongs to the dickkopf family. As to quaternary structure, interacts with LRP5 and LRP6. Post-translationally, may be proteolytically processed by a furin-like protease.

It localises to the secreted. Functionally, antagonizes canonical Wnt signaling by inhibiting LRP5/6 interaction with Wnt and by forming a ternary complex with the transmembrane protein KREMEN that promotes internalization of LRP5/6. DKKs play an important role in vertebrate development, where they locally inhibit Wnt regulated processes such as antero-posterior axial patterning, limb development, somitogenesis and eye formation. In the adult, Dkks are implicated in bone formation and bone disease, cancer and Alzheimer disease. This Mus musculus (Mouse) protein is Dickkopf-related protein 2.